Reading from the N-terminus, the 192-residue chain is Transmembrane protein 276 (192 aa).

The N-terminal stretch at 1 to 32 (MVSKPRNEWSTALSHLVLAGVSLHAAVSSVQS) is a signal peptide. 4 consecutive transmembrane segments (helical) span residues 35–55 (GAAA…APEL), 63–83 (AGAW…FHWV), 92–112 (LLLG…PEGC), and 114–134 (VAGQ…AVFT).

It localises to the membrane. The polypeptide is Transmembrane protein 276 (Rattus norvegicus (Rat)).